The following is a 351-amino-acid chain: MLKFIQNNREGTALLAILTLFALLGIIDRNYFSLQTFTMIFSSAQILILLAIGATLVMLTRNIDVSVGSITGLCAVTVGMALNAGFGLVASCLFALLVGMVAGFFNGILVTWLRIPAIVATLGTLGLYRGLMLLLTGGKWIEGLPADLKSLSTPILFSISPIGWLTMLLILAMAWLLGNTAFGRSFYATGDNLQGARQLGVRTDSIRIFAFSMNGVMAALAGIVFASQIGFIPNQTGNGLEMKAIAACVLGGISLLGGTGTIIGAILGAFLLTQIDSVLVLLRLPAWWNDFIAGLVLLGVLVFDGRLRCAVERNIRQQKYARFTAQAIISDKKPTVSDNNPAASNKKKAAL.

9 consecutive transmembrane segments (helical) span residues 14–34, 39–59, 70–90, 93–113, 115–135, 155–175, 213–233, 252–272, and 284–304; these read LLAI…YFSL, MIFS…LVML, ITGL…GLVA, LFAL…VTWL, IPAI…MLLL, ILFS…AMAW, MNGV…GFIP, GISL…AFLL, and LPAW…LVFD.

It belongs to the binding-protein-dependent transport system permease family. AraH/RbsC subfamily. In terms of assembly, the complex is composed of two ATP-binding proteins (LsrA), two transmembrane proteins (LsrC and LsrD) and a solute-binding protein (LsrB).

The protein localises to the cell inner membrane. Its function is as follows. Part of the ABC transporter complex LsrABCD involved in autoinducer 2 (AI-2) import. Probably responsible for the translocation of the substrate across the membrane. The sequence is that of Autoinducer 2 import system permease protein LsrC (lsrC) from Yersinia pseudotuberculosis serotype O:3 (strain YPIII).